Here is a 206-residue protein sequence, read N- to C-terminus: Putative archaetidylserine decarboxylase proenzyme (206 aa).

Ser-172 serves as the catalytic Schiff-base intermediate with substrate; via pyruvic acid. Residue Ser-172 is modified to Pyruvic acid (Ser); by autocatalysis.

This sequence belongs to the phosphatidylserine decarboxylase family. PSD-A subfamily. As to quaternary structure, heterodimer of a large membrane-associated beta subunit and a small pyruvoyl-containing alpha subunit. Pyruvate is required as a cofactor. Post-translationally, is synthesized initially as an inactive proenzyme. Formation of the active enzyme involves a self-maturation process in which the active site pyruvoyl group is generated from an internal serine residue via an autocatalytic post-translational modification. Two non-identical subunits are generated from the proenzyme in this reaction, and the pyruvate is formed at the N-terminus of the alpha chain, which is derived from the carboxyl end of the proenzyme. The post-translation cleavage follows an unusual pathway, termed non-hydrolytic serinolysis, in which the side chain hydroxyl group of the serine supplies its oxygen atom to form the C-terminus of the beta chain, while the remainder of the serine residue undergoes an oxidative deamination to produce ammonia and the pyruvoyl prosthetic group on the alpha chain.

It localises to the cell membrane. It catalyses the reaction archaetidylserine + H(+) = archaetidylethanolamine + CO2. Its function is as follows. Catalyzes the formation of archaetidylethanolamine (PtdEtn) from archaetidylserine (PtdSer). This chain is Putative archaetidylserine decarboxylase proenzyme, found in Methanocaldococcus jannaschii (strain ATCC 43067 / DSM 2661 / JAL-1 / JCM 10045 / NBRC 100440) (Methanococcus jannaschii).